Reading from the N-terminus, the 455-residue chain is Bifunctional protein GlmU (455 aa).

The interval 1–226 is pyrophosphorylase; it reads MSLEIVILAA…PMEVQGANDR (226 aa). UDP-N-acetyl-alpha-D-glucosamine contacts are provided by residues 8–11, K22, Q73, 78–79, 99–101, G136, E151, N166, and N224; these read LAAG, GT, and YGD. D101 serves as a coordination point for Mg(2+). N224 contributes to the Mg(2+) binding site. Positions 227–247 are linker; it reads KQLSELERHYQLRAGRRLMAQ. The N-acetyltransferase stretch occupies residues 248–455; that stretch reads GVTLRDPARF…WKRPEKIKKN (208 aa). The UDP-N-acetyl-alpha-D-glucosamine site is built by R330 and K348. The active-site Proton acceptor is H360. Positions 363 and 374 each coordinate UDP-N-acetyl-alpha-D-glucosamine. Acetyl-CoA contacts are provided by residues A377, 383–384, S402, A420, and R437; that span reads NY.

In the N-terminal section; belongs to the N-acetylglucosamine-1-phosphate uridyltransferase family. It in the C-terminal section; belongs to the transferase hexapeptide repeat family. Homotrimer. Requires Mg(2+) as cofactor.

It localises to the cytoplasm. It catalyses the reaction alpha-D-glucosamine 1-phosphate + acetyl-CoA = N-acetyl-alpha-D-glucosamine 1-phosphate + CoA + H(+). The catalysed reaction is N-acetyl-alpha-D-glucosamine 1-phosphate + UTP + H(+) = UDP-N-acetyl-alpha-D-glucosamine + diphosphate. Its pathway is nucleotide-sugar biosynthesis; UDP-N-acetyl-alpha-D-glucosamine biosynthesis; N-acetyl-alpha-D-glucosamine 1-phosphate from alpha-D-glucosamine 6-phosphate (route II): step 2/2. It participates in nucleotide-sugar biosynthesis; UDP-N-acetyl-alpha-D-glucosamine biosynthesis; UDP-N-acetyl-alpha-D-glucosamine from N-acetyl-alpha-D-glucosamine 1-phosphate: step 1/1. It functions in the pathway bacterial outer membrane biogenesis; LPS lipid A biosynthesis. Its function is as follows. Catalyzes the last two sequential reactions in the de novo biosynthetic pathway for UDP-N-acetylglucosamine (UDP-GlcNAc). The C-terminal domain catalyzes the transfer of acetyl group from acetyl coenzyme A to glucosamine-1-phosphate (GlcN-1-P) to produce N-acetylglucosamine-1-phosphate (GlcNAc-1-P), which is converted into UDP-GlcNAc by the transfer of uridine 5-monophosphate (from uridine 5-triphosphate), a reaction catalyzed by the N-terminal domain. This chain is Bifunctional protein GlmU, found in Pseudomonas fluorescens (strain Pf0-1).